Reading from the N-terminus, the 74-residue chain is ATP synthase subunit c (74 aa).

Helical transmembrane passes span 5–25 (LAHI…IGVG) and 49–69 (LFIG…VALL).

Belongs to the ATPase C chain family. F-type ATPases have 2 components, F(1) - the catalytic core - and F(0) - the membrane proton channel. F(1) has five subunits: alpha(3), beta(3), gamma(1), delta(1), epsilon(1). F(0) has three main subunits: a(1), b(2) and c(10-14). The alpha and beta chains form an alternating ring which encloses part of the gamma chain. F(1) is attached to F(0) by a central stalk formed by the gamma and epsilon chains, while a peripheral stalk is formed by the delta and b chains.

The protein resides in the cell inner membrane. F(1)F(0) ATP synthase produces ATP from ADP in the presence of a proton or sodium gradient. F-type ATPases consist of two structural domains, F(1) containing the extramembraneous catalytic core and F(0) containing the membrane proton channel, linked together by a central stalk and a peripheral stalk. During catalysis, ATP synthesis in the catalytic domain of F(1) is coupled via a rotary mechanism of the central stalk subunits to proton translocation. Functionally, key component of the F(0) channel; it plays a direct role in translocation across the membrane. A homomeric c-ring of between 10-14 subunits forms the central stalk rotor element with the F(1) delta and epsilon subunits. This is ATP synthase subunit c from Ruegeria pomeroyi (strain ATCC 700808 / DSM 15171 / DSS-3) (Silicibacter pomeroyi).